Reading from the N-terminus, the 405-residue chain is K(+)/H(+) antiporter subunit KhtU (405 aa).

12 helical membrane-spanning segments follow: residues 3–23, 29–49, 60–80, 85–105, 108–128, 153–173, 183–203, 222–242, 268–288, 297–317, 332–352, and 357–377; these read HLVF…VIAN, IIPF…KMGI, IIEF…GLEF, LIKS…INFS, LLYG…AGVI, LILG…SVVS, VGSA…FFIA, VFII…ETIH, LVVP…GLSI, VWLA…AGMV, IGLT…LGIA, and ATLK…GPLV.

The protein belongs to the monovalent cation:proton antiporter 2 (CPA2) transporter (TC 2.A.37) family. In terms of assembly, the transporter is composed of the integral membrane protein KhtU and the regulatory protein KhtT.

It localises to the cell membrane. Its activity is regulated as follows. Potassium antiport activity requires the presence of KhtT. Activity is also modulated by KhtS. Has higher activity at alkaline pH. Its function is as follows. Potassium/proton antiporter that mediates the efflux of potassium ions from the cell. Can also mediate rubidium/proton antiport, but has no permeability for sodium or lithium ions. In the absence of KhtT, does not have antiport activity, but can catalyze potassium efflux. Involved in protection of the cell from methylglyoxal, a toxic by-product of glycolysis, via activation by S-lactoyl-BSH of the antiporter activity, leading to cytoplasmic acidification and methylglyoxal resistance. This chain is K(+)/H(+) antiporter subunit KhtU, found in Bacillus subtilis (strain 168).